The sequence spans 331 residues: 6-phosphogluconolactonase (331 aa).

It belongs to the cycloisomerase 2 family.

The catalysed reaction is 6-phospho-D-glucono-1,5-lactone + H2O = 6-phospho-D-gluconate + H(+). It functions in the pathway carbohydrate degradation; pentose phosphate pathway; D-ribulose 5-phosphate from D-glucose 6-phosphate (oxidative stage): step 2/3. Its function is as follows. Catalyzes the hydrolysis of 6-phosphogluconolactone to 6-phosphogluconate. The chain is 6-phosphogluconolactonase from Sodalis glossinidius (strain morsitans).